An 81-amino-acid chain; its full sequence is Styelin-D (81 aa).

The first 22 residues, 1 to 22 (MQMKATILIVLVALFMIQQSEA), serve as a signal peptide directing secretion. At tryptophan 24 the chain carries 6'-bromotryptophan. The residue at position 26 (arginine 26) is a 3,4-dihydroxyarginine. 4,5-dihydroxylysine is present on residues lysine 27, lysine 30, and lysine 34. A 3',4'-dihydroxyphenylalanine mark is found at tyrosine 36 and tyrosine 37. Lysine 38 is subject to 4,5-dihydroxylysine. Lysine 40 is modified (5-hydroxylysine). 2 positions are modified to 3',4'-dihydroxyphenylalanine: tyrosine 41 and tyrosine 42. 5-hydroxylysine is present on lysine 44. Leucine 54 is modified (leucine amide). The propeptide at 56–81 (DMTDEEFQDFMKEVEQAREEELQSRQ) is removed in mature form.

Post-translationally, contains L-DOPA (3',4'-dihydroxyphenylalanine). In terms of tissue distribution, hemocytes and pharyngeal tissues.

Its subcellular location is the secreted. Bactericidal against several Gram-positive and Gram-negative bacteria. Plays a significant role in the innate immune mechanisms of S.clava. This chain is Styelin-D, found in Styela clava (Sea squirt).